A 590-amino-acid chain; its full sequence is Aspartate--tRNA(Asp/Asn) ligase (590 aa).

Glutamate 173 provides a ligand contact to L-aspartate. The aspartate stretch occupies residues 197–200 (QIFK). Arginine 219 lines the L-aspartate pocket. ATP-binding positions include 219–221 (RDE) and glutamine 228. Histidine 450 contributes to the L-aspartate binding site. An ATP-binding site is contributed by glutamate 484. Arginine 491 is an L-aspartate binding site. An ATP-binding site is contributed by 536 to 539 (GLDR).

This sequence belongs to the class-II aminoacyl-tRNA synthetase family. Type 1 subfamily. Homodimer.

It localises to the cytoplasm. The enzyme catalyses tRNA(Asx) + L-aspartate + ATP = L-aspartyl-tRNA(Asx) + AMP + diphosphate. Functionally, aspartyl-tRNA synthetase with relaxed tRNA specificity since it is able to aspartylate not only its cognate tRNA(Asp) but also tRNA(Asn). Reaction proceeds in two steps: L-aspartate is first activated by ATP to form Asp-AMP and then transferred to the acceptor end of tRNA(Asp/Asn). This Coxiella burnetii (strain RSA 331 / Henzerling II) protein is Aspartate--tRNA(Asp/Asn) ligase.